The following is a 1398-amino-acid chain: MAP-homologous protein 1 (1398 aa).

The residue at position 1 (methionine 1) is an N-acetylmethionine. Residues glycine 21–glycine 77 are disordered. The segment covering serine 27–proline 36 has biased composition (polar residues). A compositionally biased stretch (low complexity) spans serine 63–serine 73. Serine 81 carries the phosphoserine modification. Disordered stretches follow at residues asparagine 90–proline 144, histidine 156–isoleucine 186, and threonine 191–tyrosine 210. Polar residues-rich tracts occupy residues glutamine 91–threonine 102 and valine 114–glutamate 123. A compositionally biased stretch (basic and acidic residues) spans lysine 159–isoleucine 186. Lysine 221 is covalently cross-linked (Glycyl lysine isopeptide (Lys-Gly) (interchain with G-Cter in ubiquitin)). Residue threonine 222 is modified to Phosphothreonine. 4 disordered regions span residues histidine 244–arginine 270, serine 296–histidine 382, glycine 395–glutamate 428, and asparagine 515–glutamine 548. Residues serine 309, serine 311, serine 354, and serine 357 each carry the phosphoserine modification. The span at serine 357 to serine 371 shows a compositional bias: low complexity. Over residues alanine 372 to serine 381 the composition is skewed to polar residues. Low complexity predominate over residues asparagine 396 to serine 426. The span at alanine 521 to glutamate 538 shows a compositional bias: basic and acidic residues. Threonine 577 carries the post-translational modification Phosphothreonine. Residues serine 605–serine 615 show a composition bias toward low complexity. 3 disordered regions span residues serine 605–proline 630, leucine 1148–glutamate 1169, and aspartate 1203–valine 1223. Positions glycine 1160–glutamate 1169 are enriched in polar residues. Basic and acidic residues predominate over residues valine 1208–valine 1223. The interval aspartate 1227 to leucine 1258 is tau/MAP repeat-like. The tract at residues glutamine 1313–asparagine 1372 is disordered. Residues glutamine 1325–serine 1337 show a composition bias toward low complexity. The span at proline 1338–asparagine 1355 shows a compositional bias: polar residues.

The protein resides in the cytoplasm. It localises to the cytoskeleton. Its subcellular location is the spindle. Its function is as follows. Essential for the formation and/or stabilization of microtubules. Binds to microtubules in vitro. This chain is MAP-homologous protein 1 (MHP1), found in Saccharomyces cerevisiae (strain ATCC 204508 / S288c) (Baker's yeast).